We begin with the raw amino-acid sequence, 147 residues long: uncharacterized protein (147 aa).

Positions 23–48 (EEVSQPEPNTANDSSTEYKGKSKDDF) are disordered. Residues 28–37 (PEPNTANDSS) are compositionally biased toward polar residues. A compositionally biased stretch (basic and acidic residues) spans 38 to 48 (TEYKGKSKDDF). Residues 85–105 (LMFCIIACSFICAIQFLFFII) form a helical membrane-spanning segment.

It is found in the membrane. This is an uncharacterized protein from Saccharomyces cerevisiae (strain ATCC 204508 / S288c) (Baker's yeast).